The primary structure comprises 291 residues: G1/S-specific cyclin-D1 (291 aa).

Thr282 is subject to Phosphothreonine.

It belongs to the cyclin family. Cyclin D subfamily. As to quaternary structure, interacts with the CDK4 and CDK6 protein kinases to form a serine/threonine kinase holoenzyme complex. The cyclin subunit imparts substrate specificity to the complex. In terms of processing, phosphorylation at Thr-282 by MAP kinases is required for ubiquitination and degradation by the DCX(AMBRA1) complex. Post-translationally, ubiquitinated by the DCX(AMBRA1) complex during the transition from G1 to S cell phase, leading to its degradation. The DCX(AMBRA1) complex represents the major regulator of CCND1 stability during the G1/S transition.

It localises to the nucleus. The protein resides in the cytoplasm. Functionally, regulatory component of the cyclin D1-CDK4 (DC) complex that phosphorylates and inhibits members of the retinoblastoma (RB) protein family including RB1 and regulates the cell-cycle during G(1)/S transition. Phosphorylation of RB1 allows dissociation of the transcription factor E2F from the RB/E2F complex and the subsequent transcription of E2F target genes which are responsible for the progression through the G(1) phase. Hypophosphorylates RB1 in early G(1) phase. Cyclin D-CDK4 complexes are major integrators of various mitogenenic and antimitogenic signals. The sequence is that of G1/S-specific cyclin-D1 (ccnd1) from Danio rerio (Zebrafish).